Here is a 234-residue protein sequence, read N- to C-terminus: HTH-type transcriptional regulator MT1864 (234 aa).

The HTH tetR-type domain occupies 15–75; that stretch reads EQIEAKIVEL…LLLVDAYSDL (61 aa). A DNA-binding region (H-T-H motif) is located at residues 38–57; sequence SLRAIARNLGMVSSAVYRYV.

Homodimer.

The protein resides in the cytoplasm. May participate in the regulatory network that controls the expression of MmpL lipid transporters. The sequence is that of HTH-type transcriptional regulator MT1864 from Mycobacterium tuberculosis (strain CDC 1551 / Oshkosh).